The following is a 278-amino-acid chain: Lipoyl-[GcvH]:protein N-lipoyltransferase (278 aa).

Residues 44–250 form the BPL/LPL catalytic domain; that stretch reads RMAPSTVRGW…SLRHYAGDLV (207 aa). Cysteine 149 serves as the catalytic Acyl-thioester intermediate.

This sequence belongs to the octanoyltransferase LipL family.

The catalysed reaction is N(6)-[(R)-lipoyl]-L-lysyl-[glycine-cleavage complex H protein] + L-lysyl-[lipoyl-carrier protein] = L-lysyl-[glycine-cleavage complex H protein] + N(6)-[(R)-lipoyl]-L-lysyl-[lipoyl-carrier protein]. The protein operates within protein modification; protein lipoylation via exogenous pathway. Functionally, catalyzes the amidotransfer (transamidation) of the lipoyl moiety from lipoyl-GcvH to the lipoyl domain of the E2 subunit of lipoate-dependent enzymes. Takes part in a pathway for scavenging of lipoic acid derived from eukaryotic host cells. Cannot use lipoyl-tripeptide (DK(L)A), lipoamide (LD), or free lipoate as substrate. In Listeria monocytogenes serovar 1/2a (strain ATCC BAA-679 / EGD-e), this protein is Lipoyl-[GcvH]:protein N-lipoyltransferase.